The primary structure comprises 230 residues: Cytidylate kinase (230 aa).

Residue 16 to 24 (GPASAGKST) coordinates ATP.

Belongs to the cytidylate kinase family. Type 1 subfamily.

It localises to the cytoplasm. The catalysed reaction is CMP + ATP = CDP + ADP. It carries out the reaction dCMP + ATP = dCDP + ADP. The protein is Cytidylate kinase of Lactobacillus gasseri (strain ATCC 33323 / DSM 20243 / BCRC 14619 / CIP 102991 / JCM 1131 / KCTC 3163 / NCIMB 11718 / NCTC 13722 / AM63).